We begin with the raw amino-acid sequence, 665 residues long: MWLFLGIAGLLTAVLSGLPSPAPSGQHKNGTIPNMTLDLEERLGIRLVNGSSRCSGSVKVLLESWEPVCAAHWNRAATEAVCKALNCGDSGKVTYLMPPTSELPPGATSGNTSSAGNTTWARAPTERCRGANWQFCKVQDQECSSDRRLVWVTCAENQAVRLVDGSSRCAGRVEMLEHGEWGTVCDDTWDLQDAHVVCKQLKCGWAVKALAGLHFTPGQGPIHRDQVNCSGTEAYLWDCPGRPGDQYCGHKEDAGVVCSEHQSWRLTGGIDSCEGQVEVYFRGVWSTVCDSEWYPSEAKVLCRSLGCGSAVARPRGLPHSLDGRMYYSCKGQEPALSTCSWRFNNSNLCSQSRAARVVCSGSQRHLNLSTSEVPSRVPVTIESSVPVSVKDKDSQGLTLLILCIVLGILLLVSTIFIVILLLRAKGQYALPASVNHQQLSTANQAGINNYHPVPITIAKEAPMLFIQPRVPADSDSSSDSDYEHYDFSSQPPVALTTFYNSQRHRVTEEEAQQNRFQMPPLEEGLEELHVSHIPAADPRPCVADVPSRGSQYHVRNNSDSSTSSEEGYCNDPSSKPPPWNSQAFYSEKSPLTEQPPNLELAGSPAVFSGPSADDSSSTSSGEWYQNFQPPPQHPPAEQFECPGPPGPQTDSIDDDEEDYDDIGAA.

The signal sequence occupies residues 1 to 16 (MWLFLGIAGLLTAVLS). Residues 17–398 (GLPSPAPSGQ…VKDKDSQGLT (382 aa)) lie on the Extracellular side of the membrane. 3 N-linked (GlcNAc...) asparagine glycosylation sites follow: Asn29, Asn34, and Asn49. 3 SRCR domains span residues 45–155 (IRLV…VTCA), 160–259 (VRLV…VVCS), and 264–360 (WRLT…VVCS). 11 cysteine pairs are disulfide-bonded: Cys54–Cys87, Cys69–Cys143, Cys82–Cys154, Cys128–Cys136, Cys169–Cys203, Cys185–Cys248, Cys198–Cys258, Cys229–Cys239, Cys289–Cys349, Cys302–Cys359, and Cys329–Cys339. 2 N-linked (GlcNAc...) asparagine glycosylation sites follow: Asn111 and Asn117. Asn228 carries an N-linked (GlcNAc...) asparagine glycan. N-linked (GlcNAc...) asparagine glycans are attached at residues Asn344 and Asn367. A helical membrane pass occupies residues 399–419 (LLILCIVLGILLLVSTIFIVI). Topologically, residues 420–665 (LLLRAKGQYA…EEDYDDIGAA (246 aa)) are cytoplasmic. The disordered stretch occupies residues 536-665 (ADPRPCVADV…EEDYDDIGAA (130 aa)). Composition is skewed to polar residues over residues 548-565 (RGSQ…TSSE) and 580-595 (NSQA…TEQP). Low complexity predominate over residues 608–621 (SGPSADDSSSTSSG). Residues 651–665 (SIDDDEEDYDDIGAA) show a composition bias toward acidic residues. Residue Tyr659 is modified to Phosphotyrosine.

Interacts (via extracellular domain) with ALCAM/CD166 (via extracellular domain). Interacts with the TCR/CD3 complex subunit CD3E. Interacts (via tyrosine phosphorylated C-terminus) with LCP2 (via SH2 domain). Interacts (via glycosylated extracellular domain) with LGALS1 and LGALS3. Interaction with LGALS1 or LGALS3 inhibits interaction with ALCAM. Interacts with VAV1. Post-translationally, after T-cell activation, becomes hyperphosphorylated on Ser and Thr residues. Phosphorylated on tyrosine residues in response to stimulation of the TCR complex. Glycosylated. Expressed predominantly in thymus, lymph node and spleen.

It localises to the cell membrane. Its function is as follows. Cell adhesion molecule that mediates cell-cell contacts and regulates T-cell responses via its interaction with ALCAM/CD166. Contributes to signaling cascades triggered by activation of the TCR/CD3 complex. Functions as a costimulatory molecule; promotes T-cell activation and proliferation. Contributes to the formation and maturation of the immunological synapse. Functions as a calcium-dependent pattern receptor that binds and aggregates both Gram-positive and Gram-negative bacteria. Binds both lipopolysaccharide (LPS) from Gram-negative bacteria and lipoteichoic acid from Gram-positive bacteria. LPS binding leads to the activation of signaling cascades and down-stream MAP kinases. Mediates activation of the inflammatory response and the secretion of pro-inflammatory cytokines in response to LPS. The sequence is that of T-cell differentiation antigen CD6 (Cd6) from Mus musculus (Mouse).